The chain runs to 664 residues: tRNA (carboxymethyluridine(34)-5-O)-methyltransferase ALKBH8 (664 aa).

The 76-residue stretch at L45–V120 folds into the RRM domain. Positions K220 to R337 constitute a Fe2OG dioxygenase domain. N227 to Y229 serves as a coordination point for 2-oxoglutarate. Positions 238 and 240 each coordinate Fe cation. H242 lines the Zn(2+) pocket. H292 provides a ligand contact to Fe cation. 2 residues coordinate 2-oxoglutarate: R328 and R334. C341, C343, and C349 together coordinate Zn(2+). The methyltransferase domain stretch occupies residues A411–V664.

It belongs to the alkB family. As to quaternary structure, interacts with TRMT112. Requires Fe(2+) as cofactor.

The protein localises to the cytoplasm. It localises to the nucleus. The catalysed reaction is 5-(carboxymethyl)uridine(34) in tRNA + S-adenosyl-L-methionine = 5-(2-methoxy-2-oxoethyl)uridine(34) in tRNA + S-adenosyl-L-homocysteine. Functionally, catalyzes the methylation of 5-carboxymethyl uridine to 5-methylcarboxymethyl uridine at the wobble position of the anticodon loop in tRNA via its methyltransferase domain. Catalyzes the last step in the formation of 5-methylcarboxymethyl uridine at the wobble position of the anticodon loop in target tRNA. Has a preference for tRNA(Arg) and tRNA(Glu), and does not bind tRNA(Lys). Binds tRNA and catalyzes the iron and alpha-ketoglutarate dependent hydroxylation of 5-methylcarboxymethyl uridine at the wobble position of the anticodon loop in tRNA via its dioxygenase domain, giving rise to 5-(S)-methoxycarbonylhydroxymethyluridine; has a preference for tRNA(Gly). Required for normal survival after DNA damage. May inhibit apoptosis and promote cell survival and angiogenesis. This Mus musculus (Mouse) protein is tRNA (carboxymethyluridine(34)-5-O)-methyltransferase ALKBH8 (Alkbh8).